A 171-amino-acid polypeptide reads, in one-letter code: Myosin regulatory light chain 12A (171 aa).

Thr18 is modified (phosphothreonine; by MLCK). Ser19 is modified (phosphoserine; by MLCK). 3 consecutive EF-hand domains span residues 28–63 (SQIQ…LGKN), 97–132 (DPED…MGDR), and 133–168 (FTDE…GAKD). Ca(2+) is bound by residues Asp41, Asn43, Asp45, and Asp52.

As to quaternary structure, myosin is a hexamer of 2 heavy chains and 4 light chains. Phosphorylation increases the actin-activated myosin ATPase activity and thereby regulates the contractile activity. It is required to generate the driving force in the migration of the cells but not necessary for localization of myosin-2 at the leading edge.

In terms of biological role, myosin regulatory subunit that plays an important role in regulation of both smooth muscle and nonmuscle cell contractile activity via its phosphorylation. Implicated in cytokinesis, receptor capping, and cell locomotion. The chain is Myosin regulatory light chain 12A (MYL12A) from Homo sapiens (Human).